Reading from the N-terminus, the 66-residue chain is Large ribosomal subunit protein bL35 (66 aa).

It belongs to the bacterial ribosomal protein bL35 family.

The protein is Large ribosomal subunit protein bL35 of Ruegeria pomeroyi (strain ATCC 700808 / DSM 15171 / DSS-3) (Silicibacter pomeroyi).